We begin with the raw amino-acid sequence, 118 residues long: Ribonuclease P protein component (118 aa).

It belongs to the RnpA family. In terms of assembly, consists of a catalytic RNA component (M1 or rnpB) and a protein subunit.

It catalyses the reaction Endonucleolytic cleavage of RNA, removing 5'-extranucleotides from tRNA precursor.. Functionally, RNaseP catalyzes the removal of the 5'-leader sequence from pre-tRNA to produce the mature 5'-terminus. It can also cleave other RNA substrates such as 4.5S RNA. The protein component plays an auxiliary but essential role in vivo by binding to the 5'-leader sequence and broadening the substrate specificity of the ribozyme. This Rickettsia akari (strain Hartford) protein is Ribonuclease P protein component.